Here is a 121-residue protein sequence, read N- to C-terminus: Large ribosomal subunit protein uL18 (121 aa).

Basic residues predominate over residues Met-1 to Ala-19. Positions Met-1–Gly-23 are disordered.

Belongs to the universal ribosomal protein uL18 family. As to quaternary structure, part of the 50S ribosomal subunit; part of the 5S rRNA/L5/L18/L25 subcomplex. Contacts the 5S and 23S rRNAs.

Its function is as follows. This is one of the proteins that bind and probably mediate the attachment of the 5S RNA into the large ribosomal subunit, where it forms part of the central protuberance. In Syntrophus aciditrophicus (strain SB), this protein is Large ribosomal subunit protein uL18.